The chain runs to 357 residues: Phospho-N-acetylmuramoyl-pentapeptide-transferase (357 aa).

The next 10 helical transmembrane spans lie at 23 to 43, 70 to 90, 91 to 111, 127 to 147, 171 to 191, 196 to 216, 236 to 256, 260 to 280, 286 to 306, and 334 to 354; these read AIFSLLTSFFINLYIGPYFIY, TMGGIFIIFSILFSTILYCNL, SNIYIWYVISILIGYGLIGFI, LKWKYFFLSIIAFIFICMIKI, YLYVFLSYFVLVGTSNAVNLT, GLAIMPVIFLTCGLTLISLFS, LAILCMAIVGSGLGFLWFNSY, VFMGDVGSLALGGSLGAIAIL, LLIIMGGIFVFETISVILQII, and LIIVRFWIVSLILLLISLISL.

Belongs to the glycosyltransferase 4 family. MraY subfamily. Mg(2+) serves as cofactor.

It is found in the cell inner membrane. The catalysed reaction is UDP-N-acetyl-alpha-D-muramoyl-L-alanyl-gamma-D-glutamyl-meso-2,6-diaminopimeloyl-D-alanyl-D-alanine + di-trans,octa-cis-undecaprenyl phosphate = di-trans,octa-cis-undecaprenyl diphospho-N-acetyl-alpha-D-muramoyl-L-alanyl-D-glutamyl-meso-2,6-diaminopimeloyl-D-alanyl-D-alanine + UMP. It functions in the pathway cell wall biogenesis; peptidoglycan biosynthesis. Functionally, catalyzes the initial step of the lipid cycle reactions in the biosynthesis of the cell wall peptidoglycan: transfers peptidoglycan precursor phospho-MurNAc-pentapeptide from UDP-MurNAc-pentapeptide onto the lipid carrier undecaprenyl phosphate, yielding undecaprenyl-pyrophosphoryl-MurNAc-pentapeptide, known as lipid I. This chain is Phospho-N-acetylmuramoyl-pentapeptide-transferase, found in Buchnera aphidicola subsp. Acyrthosiphon pisum (strain Tuc7).